We begin with the raw amino-acid sequence, 150 residues long: Deoxyuridine 5'-triphosphate nucleotidohydrolase (150 aa).

Substrate is bound by residues 69–71 (RSG), asparagine 82, 86–88 (LID), and lysine 96.

Belongs to the dUTPase family. It depends on Mg(2+) as a cofactor.

It carries out the reaction dUTP + H2O = dUMP + diphosphate + H(+). It functions in the pathway pyrimidine metabolism; dUMP biosynthesis; dUMP from dCTP (dUTP route): step 2/2. Functionally, this enzyme is involved in nucleotide metabolism: it produces dUMP, the immediate precursor of thymidine nucleotides and it decreases the intracellular concentration of dUTP so that uracil cannot be incorporated into DNA. This Neisseria meningitidis serogroup B (strain ATCC BAA-335 / MC58) protein is Deoxyuridine 5'-triphosphate nucleotidohydrolase.